Here is a 120-residue protein sequence, read N- to C-terminus: Ribonuclease P protein component (120 aa).

It belongs to the RnpA family. Consists of a catalytic RNA component (M1 or rnpB) and a protein subunit.

The catalysed reaction is Endonucleolytic cleavage of RNA, removing 5'-extranucleotides from tRNA precursor.. In terms of biological role, RNaseP catalyzes the removal of the 5'-leader sequence from pre-tRNA to produce the mature 5'-terminus. It can also cleave other RNA substrates such as 4.5S RNA. The protein component plays an auxiliary but essential role in vivo by binding to the 5'-leader sequence and broadening the substrate specificity of the ribozyme. This chain is Ribonuclease P protein component, found in Rickettsia bellii (strain RML369-C).